We begin with the raw amino-acid sequence, 334 residues long: Oligopeptide transport ATP-binding protein OppF (334 aa).

The ABC transporter domain maps to Leu-12–Met-265. Residue Gly-57–Ser-64 participates in ATP binding.

The protein belongs to the ABC transporter superfamily. As to quaternary structure, the complex is composed of two ATP-binding proteins (OppD and OppF), two transmembrane proteins (OppB and OppC) and a solute-binding protein (OppA).

Its subcellular location is the cell inner membrane. The catalysed reaction is a [peptide](out) + ATP + H2O = a [peptide](in) + ADP + phosphate + H(+). It catalyses the reaction L-alanyl-gamma-D-glutamyl-meso-2,6-diaminopimelate(out) + ATP + H2O = L-alanyl-gamma-D-glutamyl-meso-2,6-diaminopimelate(in) + ADP + phosphate + H(+). In terms of biological role, part of the ABC transporter complex OppABCDF involved in the uptake of oligopeptides, including the cell wall murein tripeptide L-alanyl-gamma-D-glutamyl-meso-diaminopimelate. Probably responsible for energy coupling to the transport system. Plays an important nutritional role and is involved in the recycling of cell wall peptides. This chain is Oligopeptide transport ATP-binding protein OppF, found in Salmonella typhimurium (strain LT2 / SGSC1412 / ATCC 700720).